The primary structure comprises 157 residues: MEFTHLNESGRARMVDVGGKDDTNREATARACIKMNRETISMIRDGQMKKGDVLSVAQVGGIMGAKRTSDIIPMCHNIFISGVDIEFKLHEEEIEISAVAKTRGKTGIEMEALTAVSVAALTIYDMCKAVDKGMVISDIMLIKKTGGKSGDYERESI.

Substrate-binding positions include 74–76 and 110–111; these read MCH and ME. Aspartate 125 is a catalytic residue.

The protein belongs to the MoaC family. Homohexamer; trimer of dimers.

It carries out the reaction (8S)-3',8-cyclo-7,8-dihydroguanosine 5'-triphosphate = cyclic pyranopterin phosphate + diphosphate. It participates in cofactor biosynthesis; molybdopterin biosynthesis. Catalyzes the conversion of (8S)-3',8-cyclo-7,8-dihydroguanosine 5'-triphosphate to cyclic pyranopterin monophosphate (cPMP). The protein is Cyclic pyranopterin monophosphate synthase of Peptoclostridium acidaminophilum (Eubacterium acidaminophilum).